The chain runs to 417 residues: NADH-quinone oxidoreductase subunit D (417 aa).

Belongs to the complex I 49 kDa subunit family. As to quaternary structure, NDH-1 is composed of 14 different subunits. Subunits NuoB, C, D, E, F, and G constitute the peripheral sector of the complex.

It localises to the cell inner membrane. It catalyses the reaction a quinone + NADH + 5 H(+)(in) = a quinol + NAD(+) + 4 H(+)(out). NDH-1 shuttles electrons from NADH, via FMN and iron-sulfur (Fe-S) centers, to quinones in the respiratory chain. The immediate electron acceptor for the enzyme in this species is believed to be ubiquinone. Couples the redox reaction to proton translocation (for every two electrons transferred, four hydrogen ions are translocated across the cytoplasmic membrane), and thus conserves the redox energy in a proton gradient. The polypeptide is NADH-quinone oxidoreductase subunit D (Methylibium petroleiphilum (strain ATCC BAA-1232 / LMG 22953 / PM1)).